The sequence spans 129 residues: Azurin iso-2 (129 aa).

A Plastocyanin-like domain is found at 1–129 (ASCETTVTSG…MMRGTLKLEE (129 aa)). Residues cysteine 3 and cysteine 26 are joined by a disulfide bond. Cu cation-binding residues include histidine 46, cysteine 112, histidine 117, and methionine 121.

It localises to the periplasm. Its function is as follows. This methylothroph organism uses azurin in the oxidation of methylamine. Iso-2 is probably the acceptor of electrons from methylamine dehydrogenase. The sequence is that of Azurin iso-2 from Methylomonas sp. (strain J).